Reading from the N-terminus, the 283-residue chain is 1-deoxypentalenic acid 11-beta-hydroxylase (283 aa).

Arginine 117 contributes to the substrate binding site. Fe cation contacts are provided by histidine 135 and aspartate 137. 2-oxoglutarate-binding positions include histidine 135–aspartate 137 and tryptophan 151. Arginine 186 serves as a coordination point for substrate. Residue histidine 224 coordinates Fe cation. 2-oxoglutarate-binding residues include serine 226 and arginine 238. Residues tryptophan 260–glutamate 283 form a disordered region.

This sequence belongs to the PhyH family. Fe cation is required as a cofactor. The cofactor is L-ascorbate.

It carries out the reaction 1-deoxypentalenate + 2-oxoglutarate + O2 = 1-deoxy-11beta-hydroxypentalenate + succinate + CO2. It participates in antibiotic biosynthesis; pentalenolactone biosynthesis. Its function is as follows. Catalyzes the conversion of 1-deoxypentalenic acid to 11-beta-hydroxy-1-deoxypentalenic acid in the biosynthesis of pentalenolactone antibiotic. In Streptomyces exfoliatus (Streptomyces hydrogenans), this protein is 1-deoxypentalenic acid 11-beta-hydroxylase (penH).